A 159-amino-acid chain; its full sequence is Ribosomal RNA large subunit methyltransferase H (159 aa).

S-adenosyl-L-methionine-binding positions include L76, G108, and 127–132; that span reads FSRMTF.

The protein belongs to the RNA methyltransferase RlmH family. Homodimer.

The protein resides in the cytoplasm. The enzyme catalyses pseudouridine(1915) in 23S rRNA + S-adenosyl-L-methionine = N(3)-methylpseudouridine(1915) in 23S rRNA + S-adenosyl-L-homocysteine + H(+). Its function is as follows. Specifically methylates the pseudouridine at position 1915 (m3Psi1915) in 23S rRNA. The sequence is that of Ribosomal RNA large subunit methyltransferase H from Bacillus licheniformis (strain ATCC 14580 / DSM 13 / JCM 2505 / CCUG 7422 / NBRC 12200 / NCIMB 9375 / NCTC 10341 / NRRL NRS-1264 / Gibson 46).